A 176-amino-acid chain; its full sequence is Nicotinamide-nucleotide adenylyltransferase (176 aa).

It belongs to the archaeal NMN adenylyltransferase family.

The protein resides in the cytoplasm. The enzyme catalyses beta-nicotinamide D-ribonucleotide + ATP + H(+) = diphosphate + NAD(+). It functions in the pathway cofactor biosynthesis; NAD(+) biosynthesis; NAD(+) from nicotinamide D-ribonucleotide: step 1/1. The chain is Nicotinamide-nucleotide adenylyltransferase from Halorubrum lacusprofundi (strain ATCC 49239 / DSM 5036 / JCM 8891 / ACAM 34).